The following is a 385-amino-acid chain: MKYELDKTDGNARRGRLVFERPQGTFTVETPAFMPVGTYGTVKGMTPEEVRATGAEILLGNTFHLWLRPGQEVMRKHGDLHDFMQWHRPILTDSGGFQVFSLGKLRKITEEGVKFQNPINGERIFLSPEKSMEIQYDLGSDIVMIFDECTPYPATFDYAKKSMEMSLRWAKRSRDRFDELGNKNALFGIIQGGVYEELRKVSVEGLVNIGFDGYAVGGLAVGEPKEDMHRILEYVCPQIPADKPRYLMGVGKPEDLVEGVRRGIDMFDCVMPTRNARNGHLFVSDGIVKIRNAKYREDTSPLDPECDCYTCKHYTKAYLYHLDKCGEILGARLNTIHNLRYYQRLMAQIRQAIEEDRFEAFVQEFYAKMGKPVPPMQSEIKSDEG.

Residue D93 is the Proton acceptor of the active site. Substrate is bound by residues 93–97 (DSGGF), D147, Q191, and G218. Positions 249–255 (GVGKPED) are RNA binding. Residue D268 is the Nucleophile of the active site. The segment at 273–277 (TRNAR) is RNA binding; important for wobble base 34 recognition. 4 residues coordinate Zn(2+): C306, C308, C311, and H337.

This sequence belongs to the queuine tRNA-ribosyltransferase family. As to quaternary structure, homodimer. Within each dimer, one monomer is responsible for RNA recognition and catalysis, while the other monomer binds to the replacement base PreQ1. Requires Zn(2+) as cofactor.

The catalysed reaction is 7-aminomethyl-7-carbaguanine + guanosine(34) in tRNA = 7-aminomethyl-7-carbaguanosine(34) in tRNA + guanine. It functions in the pathway tRNA modification; tRNA-queuosine biosynthesis. Functionally, catalyzes the base-exchange of a guanine (G) residue with the queuine precursor 7-aminomethyl-7-deazaguanine (PreQ1) at position 34 (anticodon wobble position) in tRNAs with GU(N) anticodons (tRNA-Asp, -Asn, -His and -Tyr). Catalysis occurs through a double-displacement mechanism. The nucleophile active site attacks the C1' of nucleotide 34 to detach the guanine base from the RNA, forming a covalent enzyme-RNA intermediate. The proton acceptor active site deprotonates the incoming PreQ1, allowing a nucleophilic attack on the C1' of the ribose to form the product. After dissociation, two additional enzymatic reactions on the tRNA convert PreQ1 to queuine (Q), resulting in the hypermodified nucleoside queuosine (7-(((4,5-cis-dihydroxy-2-cyclopenten-1-yl)amino)methyl)-7-deazaguanosine). The chain is Queuine tRNA-ribosyltransferase from Pasteurella multocida (strain Pm70).